The chain runs to 401 residues: Coenzyme A biosynthesis bifunctional protein CoaBC (401 aa).

Residues M1–S190 are phosphopantothenoylcysteine decarboxylase. The active-site Proton donor is C159. The interval I191 to H401 is phosphopantothenate--cysteine ligase. Residues D279, K289, P307 to V310, F326, K340, and K344 contribute to the CTP site.

The protein in the N-terminal section; belongs to the HFCD (homo-oligomeric flavin containing Cys decarboxylase) superfamily. It in the C-terminal section; belongs to the PPC synthetase family. The cofactor is Mg(2+). It depends on FMN as a cofactor.

The enzyme catalyses N-[(R)-4-phosphopantothenoyl]-L-cysteine + H(+) = (R)-4'-phosphopantetheine + CO2. The catalysed reaction is (R)-4'-phosphopantothenate + L-cysteine + CTP = N-[(R)-4-phosphopantothenoyl]-L-cysteine + CMP + diphosphate + H(+). It participates in cofactor biosynthesis; coenzyme A biosynthesis; CoA from (R)-pantothenate: step 2/5. The protein operates within cofactor biosynthesis; coenzyme A biosynthesis; CoA from (R)-pantothenate: step 3/5. Functionally, catalyzes two sequential steps in the biosynthesis of coenzyme A. In the first step cysteine is conjugated to 4'-phosphopantothenate to form 4-phosphopantothenoylcysteine. In the second step the latter compound is decarboxylated to form 4'-phosphopantotheine. The chain is Coenzyme A biosynthesis bifunctional protein CoaBC from Vibrio vulnificus (strain CMCP6).